The primary structure comprises 929 residues: MEGDGVPWGSEPVSGPGPGGGGMIRELCRGFGRYRRYLGRLRQNLRETQKFFRDIKCSHNHTCLSSLTGGGGAERGPAGDVAETGLQAGQLSCISFPPKEEKYLQQIVDCLPCILILGQDCNVKCQLLNLLLGVQVLPTTKLGSEESCKLRRLRFTYGTQTRVSLALPGQYELVHTLVAHQGNWETIPEEDLEVQENNEDAAHVLAELEVTMHHALLQEVDVVVAPCQGLRPTVDVLGDLVNDFLPVITYALHKDELSERDEQELQEIRKYFSFPVFFFKVPKLGSEIIDSSTRRMESERSPLYRQLIDLGYLSSSHWNCGAPGQDTKAQSMLVEQSEKLRHLSTFSHQVLQTRLVDAAKALNLVHCHCLDIFINQAFDMQRDLQITPKRLEYTRKKENELYESLMNIANRKQEEMKDMIVETLNTMKEELLDDATNMEFKDVIVPENGEPVGTREIKCCIRQIQELIISRLNQAVANKLISSVDYLRESFVGTLERCLQSLEKSQDVSVHITSNYLKQILNAAYHVEVTFHSGSSVTRMLWEQIKQIIQRITWVSPPAITLEWKRKVAQEAIESLSASKLAKSICSQFRTRLNSSHEAFAASLRQLEAGHSGRLEKTEDLWLRVRKDHAPRLARLSLESCSLQDVLLHRKPKLGQELGRGQYGVVYLCDNWGGHFPCALKSVVPPDEKHWNDLALEFHYMRSLPKHERLVDLHGSVIDYNYGGGSSIAVLLIMERLHRDLYTGLKAGLTLETRLQIALDVVEGIRFLHSQGLVHRDIKLKNVLLDKQNRAKITDLGFCKPEAMMSGSIVGTPIHMAPELFTGKYDNSVDVYAFGILFWYICSGSVKLPEAFERCASKDHLWNNVRRGARPERLPVFDEECWQLMEACWDGDPLKRPLLGIVQPMLQGIMNRLCKSNSEQPNRGLDDST.

Positions 1 to 14 (MEGDGVPWGSEPVS) are enriched in low complexity. Residues 1 to 21 (MEGDGVPWGSEPVSGPGPGGG) are disordered. Coiled coils occupy residues 189–215 (EEDL…MHHA) and 395–431 (RKKE…KEEL). In terms of domain architecture, Protein kinase spans 652–906 (PKLGQELGRG…PLLGIVQPML (255 aa)). Residues 658–666 (LGRGQYGVV) and Lys681 contribute to the ATP site. Asp777 acts as the Proton acceptor in catalysis.

It belongs to the protein kinase superfamily. Ser/Thr protein kinase family. Predominantly expressed in skeletal muscle and testis. Expressed in basolateral and apical membranes of all tubular epithelia. Expressed in thin ascending limb of the loop of Henle and the distal convoluted tubule. Expressed in all layers of transitional ureteric epithelium and in the ureteric smooth-muscle cells. Weakly expressed in heart, brain, placenta, kidney, pancreas, spleen, thymus, prostate, uterus, small intestine, white blood cells, stomach, spinal cord and adrenal gland. Is widely distributed in the CNS. Also detected in several tumor cell lines. Expressed in the skin.

It localises to the cytoplasm. The protein localises to the cell membrane. The protein resides in the apical cell membrane. Its subcellular location is the basolateral cell membrane. It is found in the cell junction. The catalysed reaction is L-seryl-[protein] + ATP = O-phospho-L-seryl-[protein] + ADP + H(+). The enzyme catalyses L-threonyl-[protein] + ATP = O-phospho-L-threonyl-[protein] + ADP + H(+). It carries out the reaction L-tyrosyl-[protein] + ATP = O-phospho-L-tyrosyl-[protein] + ADP + H(+). Its function is as follows. Acts as a positive regulator of ERK phosphorylation downstream of fibroblast growth factor-receptor activation. Involved in the regulation of both caspase-dependent apoptosis and caspase-independent cell death. In the skin, it plays a predominant role in suppressing caspase-dependent apoptosis in response to UV stress in a range of dermal cell types. This is Dual serine/threonine and tyrosine protein kinase (DSTYK) from Homo sapiens (Human).